A 265-amino-acid polypeptide reads, in one-letter code: NAD kinase (265 aa).

The Proton acceptor role is filled by D45. Residues 45-46 (DG), 121-122 (NE), R147, D149, A184, and Q221 each bind NAD(+).

It belongs to the NAD kinase family. It depends on a divalent metal cation as a cofactor.

It localises to the cytoplasm. It carries out the reaction NAD(+) + ATP = ADP + NADP(+) + H(+). Involved in the regulation of the intracellular balance of NAD and NADP, and is a key enzyme in the biosynthesis of NADP. Catalyzes specifically the phosphorylation on 2'-hydroxyl of the adenosine moiety of NAD to yield NADP. This is NAD kinase from Leuconostoc citreum (strain KM20).